The following is a 97-amino-acid chain: Co-chaperonin GroES (97 aa).

The protein belongs to the GroES chaperonin family. In terms of assembly, heptamer of 7 subunits arranged in a ring. Interacts with the chaperonin GroEL.

It is found in the cytoplasm. Functionally, together with the chaperonin GroEL, plays an essential role in assisting protein folding. The GroEL-GroES system forms a nano-cage that allows encapsulation of the non-native substrate proteins and provides a physical environment optimized to promote and accelerate protein folding. GroES binds to the apical surface of the GroEL ring, thereby capping the opening of the GroEL channel. The chain is Co-chaperonin GroES from Pseudarthrobacter chlorophenolicus (strain ATCC 700700 / DSM 12829 / CIP 107037 / JCM 12360 / KCTC 9906 / NCIMB 13794 / A6) (Arthrobacter chlorophenolicus).